The primary structure comprises 38 residues: Large ribosomal subunit protein bL36 (38 aa).

Belongs to the bacterial ribosomal protein bL36 family.

The polypeptide is Large ribosomal subunit protein bL36 (Acinetobacter baylyi (strain ATCC 33305 / BD413 / ADP1)).